Consider the following 116-residue polypeptide: Peptidyl-tRNA hydrolase (116 aa).

The protein belongs to the PTH2 family.

The protein localises to the cytoplasm. The enzyme catalyses an N-acyl-L-alpha-aminoacyl-tRNA + H2O = an N-acyl-L-amino acid + a tRNA + H(+). Its function is as follows. The natural substrate for this enzyme may be peptidyl-tRNAs which drop off the ribosome during protein synthesis. This is Peptidyl-tRNA hydrolase (pth) from Methanococcus maripaludis (strain DSM 14266 / JCM 13030 / NBRC 101832 / S2 / LL).